A 93-amino-acid polypeptide reads, in one-letter code: Alpha-defensin 3 (93 aa).

The N-terminal stretch at 1–16 (MKTLVLLSALVLLAFQ) is a signal peptide. A propeptide spanning residues 17 to 58 (VQADPIQNTDEETKTEEQPGEDDQAVSVSFGDPEGSSLQEES) is cleaved from the precursor. Residues 22 to 56 (IQNTDEETKTEEQPGEDDQAVSVSFGDPEGSSLQE) are disordered. 3 disulfides stabilise this stretch: cysteine 64-cysteine 92, cysteine 66-cysteine 81, and cysteine 71-cysteine 91.

This sequence belongs to the alpha-defensin family. Paneth cells of the small bowel.

The protein resides in the secreted. In terms of biological role, probably contributes to the antimicrobial barrier function of the small bowel mucosa. The polypeptide is Alpha-defensin 3 (Defa3) (Mus musculus (Mouse)).